Consider the following 261-residue polypeptide: SLA class II histocompatibility antigen, DQ haplotype C beta chain (261 aa).

Positions 1–31 (MSGMVALRLPRGLWTAALTVMLVVLGAPVAE) are cleaved as a signal peptide. The tract at residues 32–126 (GRDSPQDFVF…IEEGTTLQRR (95 aa)) is beta-1. Topologically, residues 32–230 (GRDSPQDFVF…RAQSESAQSK (199 aa)) are extracellular. Cystine bridges form between Cys-47–Cys-111 and Cys-149–Cys-205. A glycan (N-linked (GlcNAc...) asparagine) is linked at Asn-51. The interval 127 to 220 (VQPTVTISPS…SLQNPILVEW (94 aa)) is beta-2. The Ig-like C1-type domain maps to 129-233 (PTVTISPSKA…SESAQSKMLS (105 aa)). The connecting peptide stretch occupies residues 221-230 (RAQSESAQSK). A helical membrane pass occupies residues 231-251 (MLSGVGGFVLGLIFLGLGLFI). At 252-261 (RHRSQKGLVR) the chain is on the cytoplasmic side.

The protein belongs to the MHC class II family.

The protein resides in the membrane. The sequence is that of SLA class II histocompatibility antigen, DQ haplotype C beta chain from Sus scrofa (Pig).